Consider the following 67-residue polypeptide: Prokaryotic ubiquitin-like protein Pup (67 aa).

Residues M1–A36 are disordered. The tract at residues T23 to F61 is ARC ATPase binding. Residue E67 forms an Isoglutamyl lysine isopeptide (Glu-Lys) (interchain with K-? in acceptor proteins) linkage.

This sequence belongs to the prokaryotic ubiquitin-like protein family. Strongly interacts with the proteasome-associated ATPase ARC through a hydrophobic interface; the interacting region of Pup lies in its C-terminal half. There is one Pup binding site per ARC hexamer ring.

The protein operates within protein degradation; proteasomal Pup-dependent pathway. In terms of biological role, protein modifier that is covalently attached to lysine residues of substrate proteins, thereby targeting them for proteasomal degradation. The tagging system is termed pupylation. The chain is Prokaryotic ubiquitin-like protein Pup from Bifidobacterium longum (strain DJO10A).